The sequence spans 384 residues: Lipid-A-disaccharide synthase (384 aa).

Belongs to the LpxB family.

The enzyme catalyses a lipid X + a UDP-2-N,3-O-bis[(3R)-3-hydroxyacyl]-alpha-D-glucosamine = a lipid A disaccharide + UDP + H(+). It functions in the pathway bacterial outer membrane biogenesis; LPS lipid A biosynthesis. In terms of biological role, condensation of UDP-2,3-diacylglucosamine and 2,3-diacylglucosamine-1-phosphate to form lipid A disaccharide, a precursor of lipid A, a phosphorylated glycolipid that anchors the lipopolysaccharide to the outer membrane of the cell. The sequence is that of Lipid-A-disaccharide synthase from Gloeothece citriformis (strain PCC 7424) (Cyanothece sp. (strain PCC 7424)).